The primary structure comprises 330 residues: Probable ADP,ATP carrier protein At5g56450 (330 aa).

Residues 1–10 (MCISKEDEED) show a composition bias toward acidic residues. Positions 1-22 (MCISKEDEEDPSRNRRNQSPLS) are disordered. The next 6 helical transmembrane spans lie at 27–61 (LKHF…LQTQ), 103–127 (GSSV…RSIL), 137–171 (IFSG…RLAA), 203–230 (GLPA…EIFS), 236–270 (ELAL…IMMQ), and 300–325 (GALS…KRFL). Solcar repeat units follow at residues 28-126 (KHFQ…YRSI), 139-228 (SGAL…VKEI), and 241-324 (KRWG…VKRF). ADP is bound by residues R108 and K120. R264 provides a ligand contact to ADP. Positions 264-269 (RRRIMM) match the Substrate recognition motif.

This sequence belongs to the mitochondrial carrier (TC 2.A.29) family. In terms of assembly, monomer.

Its subcellular location is the membrane. The catalysed reaction is ADP(in) + ATP(out) = ADP(out) + ATP(in). ADP:ATP antiporter that catalyzes the exchange of ADP and ATP across the membrane. The chain is Probable ADP,ATP carrier protein At5g56450 from Arabidopsis thaliana (Mouse-ear cress).